A 561-amino-acid polypeptide reads, in one-letter code: Carboxylesterase 1E (561 aa).

The first 18 residues, 1–18 (MCLYALILVFLAAFTAGG), serve as a signal peptide directing secretion. 2 N-linked (GlcNAc...) asparagine glycosylation sites follow: N79 and N107. An intrachain disulfide couples C87 to C116. S221 serves as the catalytic Acyl-ester intermediate. C273 and C284 are disulfide-bonded. Catalysis depends on charge relay system residues E353 and H466. The N-linked (GlcNAc...) asparagine glycan is linked to N489. The short motif at 558 to 561 (HTEL) is the Prevents secretion from ER element.

It belongs to the type-B carboxylesterase/lipase family. As to expression, expressed in liver.

It localises to the endoplasmic reticulum lumen. The protein localises to the microsome membrane. The catalysed reaction is a carboxylic ester + H2O = an alcohol + a carboxylate + H(+). The enzyme catalyses all-trans-retinyl hexadecanoate + H2O = all-trans-retinol + hexadecanoate + H(+). In terms of biological role, involved in the detoxification of xenobiotics and in the activation of ester and amide prodrugs. Hydrolyzes retinyl esters. This Rattus norvegicus (Rat) protein is Carboxylesterase 1E (Ces1e).